The chain runs to 82 residues: Penaeidin-3h (82 aa).

The N-terminal stretch at 1-19 is a signal peptide; it reads MRLVVCLVFLASFALVCQG. At Q20 the chain carries Pyrrolidone carboxylic acid. Cystine bridges form between C55-C73 and C67-C74. A Serine amide modification is found at S81.

It belongs to the penaeidin family.

It localises to the cytoplasmic granule. Functionally, antibacterial and antifungal activity. Presents chitin-binding activity. This chain is Penaeidin-3h, found in Penaeus vannamei (Whiteleg shrimp).